A 105-amino-acid chain; its full sequence is MTDVARPDVQACEQVRLTAWVRGRVQGVGFRWWVRARALELGLTGVARNLPDSRVEVVAEGPRERCAELLELLSGVPRHGRPGFVAGVTAEWSTARGGYSGFTQA.

Residues 16 to 105 form the Acylphosphatase-like domain; it reads RLTAWVRGRV…RGGYSGFTQA (90 aa). Residues arginine 31 and asparagine 49 contribute to the active site.

Belongs to the acylphosphatase family.

It catalyses the reaction an acyl phosphate + H2O = a carboxylate + phosphate + H(+). The polypeptide is Acylphosphatase (acyP) (Acidothermus cellulolyticus (strain ATCC 43068 / DSM 8971 / 11B)).